The chain runs to 104 residues: Acetylcholine receptor subunit alpha (104 aa).

Residues 1–104 lie on the Extracellular side of the membrane; sequence NPPAIFKSYC…YFIVNVIIPC (104 aa). Disulfide bonds link cysteine 10–cysteine 24 and cysteine 74–cysteine 75. An N-linked (GlcNAc...) asparagine glycan is attached at asparagine 23.

The protein belongs to the ligand-gated ion channel (TC 1.A.9) family. Acetylcholine receptor (TC 1.A.9.1) subfamily. Alpha-1/CHRNA1 sub-subfamily. One of the alpha chains that assemble within the acetylcholine receptor, a pentamer of two alpha chains, a beta, a delta, and a gamma or epsilon chains.

The protein resides in the postsynaptic cell membrane. The protein localises to the cell membrane. The catalysed reaction is K(+)(in) = K(+)(out). It carries out the reaction Na(+)(in) = Na(+)(out). Upon acetylcholine binding, the AChR responds by an extensive change in conformation that affects all subunits and leads to opening of an ion-conducting channel across the plasma membrane. The sequence is that of Acetylcholine receptor subunit alpha (CHRNA1) from Naja naja (Indian cobra).